The following is a 155-amino-acid chain: Arginine repressor (155 aa).

The protein belongs to the ArgR family.

It is found in the cytoplasm. The protein operates within amino-acid biosynthesis; L-arginine biosynthesis [regulation]. Its function is as follows. Regulates arginine biosynthesis genes. The polypeptide is Arginine repressor (Mannheimia succiniciproducens (strain KCTC 0769BP / MBEL55E)).